The following is a 47-amino-acid chain: uncharacterized protein (47 aa).

The N-terminal stretch at 1-18 (MKKWLLIIAGALIISACA) is a signal peptide. Residues 28-47 (EGSHSGVKFDKDSRQWGLNQ) are disordered.

This is an uncharacterized protein from Haemophilus influenzae (strain ATCC 51907 / DSM 11121 / KW20 / Rd).